A 357-amino-acid chain; its full sequence is Phosphoribosylformylglycinamidine cyclo-ligase (357 aa).

Belongs to the AIR synthase family.

It is found in the cytoplasm. The catalysed reaction is 2-formamido-N(1)-(5-O-phospho-beta-D-ribosyl)acetamidine + ATP = 5-amino-1-(5-phospho-beta-D-ribosyl)imidazole + ADP + phosphate + H(+). The protein operates within purine metabolism; IMP biosynthesis via de novo pathway; 5-amino-1-(5-phospho-D-ribosyl)imidazole from N(2)-formyl-N(1)-(5-phospho-D-ribosyl)glycinamide: step 2/2. This is Phosphoribosylformylglycinamidine cyclo-ligase from Allorhizobium ampelinum (strain ATCC BAA-846 / DSM 112012 / S4) (Agrobacterium vitis (strain S4)).